We begin with the raw amino-acid sequence, 1055 residues long: Inactive exonuclease DIS3L2 (1055 aa).

Disordered stretches follow at residues Met1–Glu109 and Ser229–Gln249. Residues His17–Lys32 show a composition bias toward basic residues. Residues Glu39–Asp59 show a composition bias toward basic and acidic residues. The span at Pro97–Pro108 shows a compositional bias: low complexity. Positions Tyr367 to Asn446 constitute a CSD2 domain. In terms of domain architecture, RNB spans Arg476–Glu824. Mg(2+) is bound by residues Asp488 and Asp497.

It belongs to the RNR ribonuclease family. DIS3L2 subfamily.

It is found in the cytoplasm. In terms of biological role, probable inactive 3'-5'-exoribonuclease. Is unable to complement the growth defect of a yeast mutant lacking RRP44 exonuclease. The chain is Inactive exonuclease DIS3L2 from Arabidopsis thaliana (Mouse-ear cress).